Consider the following 953-residue polypeptide: MNASGRSHSKGPIIRSVSLEDLKRNSSFKGNLKYKDEVTSHKEPQVGTLSNEELLKDLDNMLRGKLNMGRNSFHADKRNKSDGNISALTFKARSGLEGDIRTIDIQQDSSDENDNFKFSDDGVNKDRNNEKDNNTDNAVEFQDDAEEAEEENEDESFANVDELDGFDLNKVSDGKHVPINEKGEVDYNMPVDKEFQKSLDQCAASLEERSSAPYALQRAVDWELKMFYSLEDELSEWFCSSDYMHFGQTQTLFKQKITQPQLFFDDENYAASVVECLIEDIPNSLASNLLALSYISMGCFAFTNSKSEHTKIIRRNNLMLVPHIQEIVHAFKKIAISCRDDNRNLKKQTILLFHSSTILYFICSICIEGRGENPEAVNVVIDAFEKTDLLEFLTKYIENWRWNSRLAMRIRNMISLLFKLIVLQFGDSSVYKQTKSSIYNLHGLTYPSKHPEKLSISPLHYQAFREDITSRFPDYNMPSSGLPKDVDKSESLSQFLEIPRPKSKNPLNMALIVPEKHIATPAPSPPSSPQLMHLGEGPRPRKSFQTNMAYPCLYPSDNEGSEDDTLEDRIDLNIERKPDNDIVIPFSTEEAARILSESLEIKLSTKQLWYERDLFMITERGWKQQLENEPYDYAALNHDANSSKEEKSAICIMQRIDKYYKSCLSSFNSLVFVLLQTMESSLTNNFHRKSEVSDKNLLNMLTPQLEIVRAKELSLKSAAGILHALLKWFKLSHILKFEHLAVVIHDSRYINTCASILSKYSEVYPERVFNKYVQTPNSFWKECSLSNESYRESYSVDDSGEVDTEIMPSFAYLLRILRKVTGNKTQRLKELPLSIGILFKRYYRLFNLDMYHPILKITRELTPFKNKRWKSEHMELISGVYLYEKLELTDNWVTGKDISGELSDACGQEIALRALLQFYNFQHYEISMEDLGYGHRNSSSQDLLNKESEYLNI.

2 positions are modified to phosphoserine: serine 18 and serine 81. The tract at residues 104 to 160 (DIQQDSSDENDNFKFSDDGVNKDRNNEKDNNTDNAVEFQDDAEEAEEENEDESFANV) is disordered. Residues 114–134 (DNFKFSDDGVNKDRNNEKDNN) show a composition bias toward basic and acidic residues. Positions 141–160 (FQDDAEEAEEENEDESFANV) are enriched in acidic residues. Serine 524, serine 527, and serine 528 each carry phosphoserine.

The protein belongs to the FAR11 family. As to quaternary structure, component of a complex at least composed of FAR3, FAR7, FAR8, FAR10, FAR11 and VPS64.

Functionally, participates in the control of the reentry into the cell cycle following pheromone treatment. The polypeptide is Factor arrest protein 11 (FAR11) (Saccharomyces cerevisiae (strain ATCC 204508 / S288c) (Baker's yeast)).